A 350-amino-acid polypeptide reads, in one-letter code: Phosphoribosylformylglycinamidine cyclo-ligase (350 aa).

This sequence belongs to the AIR synthase family.

The protein localises to the cytoplasm. It catalyses the reaction 2-formamido-N(1)-(5-O-phospho-beta-D-ribosyl)acetamidine + ATP = 5-amino-1-(5-phospho-beta-D-ribosyl)imidazole + ADP + phosphate + H(+). It participates in purine metabolism; IMP biosynthesis via de novo pathway; 5-amino-1-(5-phospho-D-ribosyl)imidazole from N(2)-formyl-N(1)-(5-phospho-D-ribosyl)glycinamide: step 2/2. The polypeptide is Phosphoribosylformylglycinamidine cyclo-ligase (Syntrophotalea carbinolica (strain DSM 2380 / NBRC 103641 / GraBd1) (Pelobacter carbinolicus)).